Here is a 559-residue protein sequence, read N- to C-terminus: Cytoplasmic polyadenylation element-binding protein 1 (559 aa).

The segment at 222 to 243 is disordered; it reads SRMDHSSSPLTPPPSASPSGSL. 2 consecutive RRM domains span residues 304–401 and 423–504; these read CKVF…DAQV and NTVF…PYLE. Zn(2+) is bound by residues Cys508, Cys511, Cys520, Cys525, Cys530, Cys533, His538, and His546.

This sequence belongs to the RRM CPEB family. As to expression, expressed in oocytes (at protein level). During oocyte maturation becomes detectable at stage Ib, and remains ubiquitously distributed within the oocyte cytoplasm until stage II. It then follows a gradual accumulation to the future animal pole during stage III, and remains localized to this pole at stage IV (at protein level). Expressed in oocytes, blastomeres and pre-mid-blastula transition embryos. Its expression during oogenesis is ubiquitous at stages I and II, but gradually accumulated at the periphery of the oocyte in the presumptive animal pole during stage III. Expression was maintained in that region at stage IV, and then became delocalized at stage V to cover a much broader area presumably encompassing the future blastodisc.

It is found in the cytoplasm. Its function is as follows. Sequence-specific RNA-binding protein that regulates mRNA cytoplasmic polyadenylation and translation initiation during oocyte maturation and early development. Binds to the cytoplasmic polyadenylation element (CPE), an uridine-rich sequence element (consensus sequence 5'-UUUUUAU-3') within the mRNA 3'-UTR. In Danio rerio (Zebrafish), this protein is Cytoplasmic polyadenylation element-binding protein 1 (cpeb1).